Consider the following 469-residue polypeptide: 3-isopropylmalate dehydratase large subunit (469 aa).

3 residues coordinate [4Fe-4S] cluster: cysteine 347, cysteine 407, and cysteine 410.

The protein belongs to the aconitase/IPM isomerase family. LeuC type 1 subfamily. In terms of assembly, heterodimer of LeuC and LeuD. The cofactor is [4Fe-4S] cluster.

It catalyses the reaction (2R,3S)-3-isopropylmalate = (2S)-2-isopropylmalate. It functions in the pathway amino-acid biosynthesis; L-leucine biosynthesis; L-leucine from 3-methyl-2-oxobutanoate: step 2/4. In terms of biological role, catalyzes the isomerization between 2-isopropylmalate and 3-isopropylmalate, via the formation of 2-isopropylmaleate. This chain is 3-isopropylmalate dehydratase large subunit, found in Prochlorococcus marinus (strain NATL2A).